The following is a 223-amino-acid chain: Protein-L-isoaspartate O-methyltransferase (223 aa).

The active site involves serine 70.

Belongs to the methyltransferase superfamily. L-isoaspartyl/D-aspartyl protein methyltransferase family.

The protein resides in the cytoplasm. The enzyme catalyses [protein]-L-isoaspartate + S-adenosyl-L-methionine = [protein]-L-isoaspartate alpha-methyl ester + S-adenosyl-L-homocysteine. In terms of biological role, catalyzes the methyl esterification of L-isoaspartyl residues in peptides and proteins that result from spontaneous decomposition of normal L-aspartyl and L-asparaginyl residues. It plays a role in the repair and/or degradation of damaged proteins. This chain is Protein-L-isoaspartate O-methyltransferase, found in Saccharophagus degradans (strain 2-40 / ATCC 43961 / DSM 17024).